Here is a 350-residue protein sequence, read N- to C-terminus: Neutral protease 2 homolog SNOG_10522 (350 aa).

An N-terminal signal peptide occupies residues 1 to 18 (MKVSSQLAVAALASFATA). A propeptide spanning residues 19–180 (ASVDVHKRET…AKALNKRTAI (162 aa)) is cleaved from the precursor. 2 cysteine pairs are disulfide-bonded: C184/C251 and C258/C276. Residue H301 participates in Zn(2+) binding. E302 is a catalytic residue. Zn(2+) contacts are provided by H305 and D316.

The protein belongs to the peptidase M35 family. It depends on Zn(2+) as a cofactor.

Its subcellular location is the secreted. The catalysed reaction is Preferential cleavage of bonds with hydrophobic residues in P1'. Also 3-Asn-|-Gln-4 and 8-Gly-|-Ser-9 bonds in insulin B chain.. Secreted metalloproteinase that allows assimilation of proteinaceous substrates. Shows high activities on basic nuclear substrates such as histone and protamine. The sequence is that of Neutral protease 2 homolog SNOG_10522 from Phaeosphaeria nodorum (strain SN15 / ATCC MYA-4574 / FGSC 10173) (Glume blotch fungus).